A 98-amino-acid chain; its full sequence is PE family immunomodulator PE35 (98 aa).

One can recognise a PE domain in the interval 1–90 (MEKMSHDPIA…DVARTYSQID (90 aa)).

The protein belongs to the mycobacterial PE family. Interacts with PPE68. PE35/PPE68 complex interacts with human TLR2.

The protein localises to the secreted. It is found in the cell surface. Functionally, plays a major role in RD1-associated pathogenesis, and may contribute to the establishment and maintenance of M.tuberculosis infection. Together with PPE68, stimulates the secretion of IL-10 and MCP-1 from human macrophages, via the interaction with human Toll-like receptor 2 (TLR2). The polypeptide is PE family immunomodulator PE35 (PE35) (Mycobacterium tuberculosis (strain CDC 1551 / Oshkosh)).